Reading from the N-terminus, the 85-residue chain is Large ribosomal subunit protein bL27 (85 aa).

The interval 1-20 (MATKKAGGSTRNGRDSEAKR) is disordered.

It belongs to the bacterial ribosomal protein bL27 family.

This is Large ribosomal subunit protein bL27 from Haemophilus influenzae (strain ATCC 51907 / DSM 11121 / KW20 / Rd).